The following is a 539-amino-acid chain: Chaperonin GroEL (539 aa).

Residues 29-32, 86-90, glycine 413, 476-478, and aspartate 492 contribute to the ATP site; these read TLGP, DGTTT, and NAA.

It belongs to the chaperonin (HSP60) family. As to quaternary structure, forms a cylinder of 14 subunits composed of two heptameric rings stacked back-to-back. Interacts with the co-chaperonin GroES.

Its subcellular location is the cytoplasm. The enzyme catalyses ATP + H2O + a folded polypeptide = ADP + phosphate + an unfolded polypeptide.. Functionally, together with its co-chaperonin GroES, plays an essential role in assisting protein folding. The GroEL-GroES system forms a nano-cage that allows encapsulation of the non-native substrate proteins and provides a physical environment optimized to promote and accelerate protein folding. The protein is Chaperonin GroEL of Macrococcus caseolyticus (strain JCSC5402) (Macrococcoides caseolyticum).